Consider the following 338-residue polypeptide: Uroporphyrinogen decarboxylase (338 aa).

Substrate-binding positions include 23 to 27 (RQAGR), Asp72, Tyr146, Thr201, and His312.

Belongs to the uroporphyrinogen decarboxylase family. As to quaternary structure, homodimer.

The protein resides in the cytoplasm. It carries out the reaction uroporphyrinogen III + 4 H(+) = coproporphyrinogen III + 4 CO2. It functions in the pathway porphyrin-containing compound metabolism; protoporphyrin-IX biosynthesis; coproporphyrinogen-III from 5-aminolevulinate: step 4/4. Functionally, catalyzes the decarboxylation of four acetate groups of uroporphyrinogen-III to yield coproporphyrinogen-III. This chain is Uroporphyrinogen decarboxylase, found in Thermodesulfovibrio yellowstonii (strain ATCC 51303 / DSM 11347 / YP87).